Consider the following 128-residue polypeptide: Protein C10 (128 aa).

It belongs to the UPF0456 family.

The protein resides in the cytoplasm. The chain is Protein C10 from Xenopus tropicalis (Western clawed frog).